A 119-amino-acid polypeptide reads, in one-letter code: Holo-[acyl-carrier-protein] synthase (119 aa).

The Mg(2+) site is built by D8 and E58.

The protein belongs to the P-Pant transferase superfamily. AcpS family. Mg(2+) is required as a cofactor.

Its subcellular location is the cytoplasm. It catalyses the reaction apo-[ACP] + CoA = holo-[ACP] + adenosine 3',5'-bisphosphate + H(+). In terms of biological role, transfers the 4'-phosphopantetheine moiety from coenzyme A to a Ser of acyl-carrier-protein. The sequence is that of Holo-[acyl-carrier-protein] synthase from Bacillus cereus (strain ATCC 10987 / NRS 248).